The sequence spans 643 residues: SURP and G-patch domain-containing protein 1 (643 aa).

2 disordered regions span residues 48-69 and 97-119; these read ARME…HPGE and KAQT…SSLK. Thr-128 is modified (phosphothreonine). The SURP motif 1 repeat unit spans residues 187-229; it reads VIEKLARFVAEGGPELEKVAMEDYKDNPAFTFLHDKNSREFLY. The residue at position 252 (Ser-252) is a Phosphoserine. The SURP motif 2 repeat unit spans residues 262 to 305; the sequence is LAEKLARFIADGGPEVETIALQNNRENQAFSFLYDPNSQGYRYY. Disordered stretches follow at residues 316–335 and 360–393; these read KAGS…LRRK and AVNP…DKVE. Ser-322 bears the Phosphoserine mark. Residues 378–384 carry the Nuclear localization signal motif; the sequence is KRKRKSR. Phosphoserine occurs at positions 407, 409, 412, and 483. The 48-residue stretch at 560-607 folds into the G-patch domain; the sequence is VENIGYQMLMKMGWKEGEGLGTEGQGIKNPVNKGATTIDGAGFGIDRP.

In terms of assembly, component of the spliceosome.

Its subcellular location is the nucleus. Functionally, plays a role in pre-mRNA splicing. The protein is SURP and G-patch domain-containing protein 1 (Sugp1) of Mus musculus (Mouse).